Here is a 285-residue protein sequence, read N- to C-terminus: tRNA-cytidine(32) 2-sulfurtransferase (285 aa).

Residues 49-54 (SGGKDS) carry the PP-loop motif motif. Residues Cys124, Cys127, and Cys215 each coordinate [4Fe-4S] cluster.

It belongs to the TtcA family. In terms of assembly, homodimer. The cofactor is Mg(2+). It depends on [4Fe-4S] cluster as a cofactor.

The protein resides in the cytoplasm. It carries out the reaction cytidine(32) in tRNA + S-sulfanyl-L-cysteinyl-[cysteine desulfurase] + AH2 + ATP = 2-thiocytidine(32) in tRNA + L-cysteinyl-[cysteine desulfurase] + A + AMP + diphosphate + H(+). Its pathway is tRNA modification. Its function is as follows. Catalyzes the ATP-dependent 2-thiolation of cytidine in position 32 of tRNA, to form 2-thiocytidine (s(2)C32). The sulfur atoms are provided by the cysteine/cysteine desulfurase (IscS) system. In Hahella chejuensis (strain KCTC 2396), this protein is tRNA-cytidine(32) 2-sulfurtransferase.